Consider the following 1846-residue polypeptide: Peripheral-type benzodiazepine receptor-associated protein 1 (1846 aa).

Disordered stretches follow at residues 57–97 (EESS…GYSC), 281–318 (NQRE…DDVE), and 560–628 (GPKD…SEVE). The span at 576-587 (PKSSEPALTTLT) shows a compositional bias: polar residues. The segment covering 599–612 (SLSNSSRSESIHNS) has biased composition (low complexity). The 68-residue stretch at 649 to 716 (ARIQVFLARY…PSNFVERVSD (68 aa)) folds into the SH3 1 domain. The tract at residues 726 to 785 (ELADSSHSSGPELSFLSGGGGGCSSGGQSSGGRSQPRPEEEAAGDELSLSPPPEGLGEPL) is disordered. Positions 742 to 755 (SGGGGGCSSGGQSS) are enriched in gly residues. Fibronectin type-III domains are found at residues 787–878 (VPYP…AGAG), 880–972 (VPSQ…TLPA), and 977–1075 (APLD…PALA). Disordered regions lie at residues 1084 to 1107 (SCLS…GLGD), 1163 to 1219 (EPTL…LDSG), 1243 to 1302 (HSRN…SDEE), 1322 to 1476 (SIPE…PESS), 1492 to 1617 (YDSE…QDLP), 1704 to 1755 (LTEA…AAQK), and 1812 to 1846 (VPSN…RVQC). Residues 1202–1219 (TQKKPSIEACHGGDLDSG) are compositionally biased toward basic and acidic residues. Positions 1251–1265 (DIQEEEEEEEEEEEE) are enriched in acidic residues. A compositionally biased stretch (polar residues) spans 1270–1283 (PCSSQKQVAGNSIR). Acidic residues predominate over residues 1324–1335 (PEEEEEEEEEEG). 2 stretches are compositionally biased toward basic and acidic residues: residues 1411-1420 (RPQDPREHCS) and 1545-1577 (AWEK…ESRG). Positions 1616–1684 (LPVRVFVALF…PCNMVAEVAV (69 aa)) constitute an SH3 2 domain. A compositionally biased stretch (polar residues) spans 1705-1719 (TEASGNGPSVYSSAH). The SH3 3 domain occupies 1755–1822 (KTSRPMVAAF…PSNFLEGPGP (68 aa)). A compositionally biased stretch (low complexity) spans 1817-1830 (LEGPGPESGSLESG).

The protein belongs to the RIMBP family. As to quaternary structure, interacts with RIMS1 and RIMS2. Interacts with TSPO. Interacts with CACNA1A. Predominantly expressed in the brain.

It localises to the cytoplasm. The protein localises to the mitochondrion. Functionally, required for synaptic transmission regulation. It probably controls the recruitement of voltage-gated calcium channels to the presynaptic membrane, and modulates neurotransmitter release. The sequence is that of Peripheral-type benzodiazepine receptor-associated protein 1 from Mus musculus (Mouse).